The sequence spans 158 residues: MHYHTNLIAALLLAALIHEGSAIWCYRCTSATPGCAEKFNWRGIGFLGEHCPEPDDICVKVTERRGARETITRDCLSALSFRKDIPADKYEGCRPAAHDEKLANYVNHTIKEHDVRRDYYTDTTFCFCFLDHRCNGASGLQTSAVIGLLTLIPALLLR.

The first 22 residues, 1 to 22 (MHYHTNLIAALLLAALIHEGSA), serve as a signal peptide directing secretion. Residues 23-136 (IWCYRCTSAT…FCFLDHRCNG (114 aa)) lie on the Extracellular side of the membrane. Asparagine 107 carries an N-linked (GlcNAc...) asparagine glycan. Asparagine 135 is lipidated: GPI-anchor amidated asparagine. The propeptide at 136–158 (GASGLQTSAVIGLLTLIPALLLR) is removed in mature form. The chain crosses the membrane as a helical span at residues 137 to 157 (ASGLQTSAVIGLLTLIPALLL). A topological domain (cytoplasmic) is located at residue arginine 158.

This sequence belongs to the quiver family.

It is found in the membrane. Its function is as follows. Required for septate junction assembly possibly by organizing the preassembly and transport of septate junction proteins. Involved in epithelial cell septate junction-mediated paracellular barrier functions of trachea, hindgut and salivary gland. The polypeptide is UPAR/Ly6 domain-containing protein crim (Drosophila melanogaster (Fruit fly)).